Reading from the N-terminus, the 387-residue chain is uncharacterized protein (387 aa).

The protein resides in the mitochondrion. This is an uncharacterized protein from Paramecium tetraurelia.